We begin with the raw amino-acid sequence, 218 residues long: Small ribosomal subunit protein uS3c (218 aa).

In terms of domain architecture, KH type-2 spans 43 to 118 (IKDYVKKNKK…RLNIAITRIE (76 aa)).

It belongs to the universal ribosomal protein uS3 family. Part of the 30S ribosomal subunit.

The protein localises to the plastid. The protein resides in the chloroplast. This is Small ribosomal subunit protein uS3c (rps3) from Phalaenopsis aphrodite subsp. formosana (Moth orchid).